A 60-amino-acid polypeptide reads, in one-letter code: Ixodegrin-Ip (60 aa).

The first 21 residues, 1-21 (MNAAFIAALFILGALTLDAMA), serve as a signal peptide directing secretion. The short motif at 49-51 (RGD) is the Cell attachment site element.

The protein belongs to the ixodegrin family. Post-translationally, contains 3 disulfide bonds. In terms of tissue distribution, expressed in salivary glands.

It is found in the secreted. Functionally, tick salivary platelet aggregation inhibitor that plays an important part in the anti-hemostatic strategy of ticks. Inhibits platelet aggregation induced by ADP, thrombin and thromboxane A2 (TXA2). Blocks platelet adhesion to soluble collagen (most probably through the binding to alpha-2/beta-1 integrin (ITGA2/ITGB1)) and binds to purified glycoprotein IIb/IIIa (ITGA2B/ITGB3) in a dose-dependent manner. In vivo, reduces thrombus weight effectively in a rat arteriovenous shunt model and inhibits thrombosis in a carrageenan-induced mouse tail thrombosis model. The chain is Ixodegrin-Ip from Ixodes pacificus (Western black-legged tick).